A 2364-amino-acid polypeptide reads, in one-letter code: Spectrin beta chain, non-erythrocytic 1 (2364 aa).

The residue at position 2 (threonine 2) is an N-acetylthreonine. Residues 2-275 (TTTVATDYDN…IITYVVTYYH (274 aa)) are actin-binding. Isoleucine 14 and serine 36 each carry phosphoserine. 2 consecutive Calponin-homology (CH) domains span residues 54-158 (AVQK…LRFQ) and 173-278 (KSAK…HYFS). N6-acetyllysine is present on lysine 90. Phosphoserine is present on serine 228. Spectrin repeat units lie at residues 303-411 (MIEK…LALR), 423-525 (LARR…QRLE), 530-636 (LQKI…RLEE), 639-742 (RLWK…RLEE), 745-847 (LLHQ…ALQD), 850-952 (ALYK…DALL), 957-1060 (IQNY…SLGE), 1063-1166 (KLQQ…NLLS), 1170-1258 (AYQQ…DRHR), 1276-1376 (DLQK…AQRL), 1381-1482 (KAEL…HNLL), 1486-1590 (EIHQ…RLEE), 1592-1696 (HRAQ…KLDE), 1698-1801 (HRLF…TQIL), and 1805-1907 (YELH…RVRL). Phosphoserine is present on residues serine 817, serine 825, serine 903, serine 1057, serine 1076, serine 1079, and serine 1237. Residues serine 1388, serine 1447, and serine 1557 each carry the phosphoserine modification. An interaction with ANK2 region spans residues 1563-2093 (IRQRLADLKQ…LLEVRRQQEE (531 aa)). Phosphotyrosine is present on tyrosine 1805. N6-acetyllysine is present on residues lysine 1815, lysine 1913, and lysine 1989. Spectrin repeat units lie at residues 1914-2014 (FRFF…EWLR) and 2018-2097 (EVHQ…EERK). Residues 2089 to 2196 (RQQEEEERKR…TLPARTQETP (108 aa)) form a disordered region. A phosphoserine mark is found at serine 2102, serine 2128, and serine 2138. The span at 2115–2131 (SQQQWDTSKGEQVSQNG) shows a compositional bias: polar residues. The span at 2145-2166 (VDTSEMVNGATEQRTSSKESSP) shows a compositional bias: polar residues. The residue at position 2147 (threonine 2147) is a Phosphothreonine. A Phosphoserine modification is found at serine 2148. The segment at 2149–2177 (EMVNGATEQRTSSKESSPIPSPTSDRKAK) is mediates interaction with CAMSAP1. Threonine 2159 carries the post-translational modification Phosphothreonine. Phosphoserine is present on residues serine 2160, serine 2161, serine 2164, serine 2165, and serine 2169. Threonine 2171 is subject to Phosphothreonine. Residues serine 2172 and serine 2184 each carry the phosphoserine modification. Polar residues predominate over residues 2184 to 2196 (SAATLPARTQETP). Threonine 2187 and threonine 2195 each carry phosphothreonine. Positions 2197–2307 (SAQMEGFLNR…WIQAISSAIS (111 aa)) constitute a PH domain. The interval 2309 to 2364 (DKHEVSASTQSTPASSRAQTLPTSVVTITSESSPGKREKDKEKDKEKRFSLFGKKK) is disordered. 2 positions are modified to phosphoserine: serine 2314 and serine 2319. The segment covering 2314 to 2341 (SASTQSTPASSRAQTLPTSVVTITSESS) has biased composition (polar residues). Residue threonine 2320 is modified to Phosphothreonine. A glycan (O-linked (GlcNAc) serine) is linked at serine 2324. Threonine 2328 is modified (phosphothreonine). 2 positions are modified to phosphoserine: serine 2340 and serine 2341. A compositionally biased stretch (basic and acidic residues) spans 2342 to 2357 (PGKREKDKEKDKEKRF).

Belongs to the spectrin family. Interacts with CAMSAP1. Interacts with ANK2. Interacts with CPNE4 (via VWFA domain). Like erythrocyte spectrin, the spectrin-like proteins are capable to form dimers which can further associate to tetramers. Can form heterodimers with SPTAN1. Isoform Short cannot bind to the axonal protein fodaxin. As to expression, isoform 2 is present in brain, lung and kidney (at protein level).

It is found in the cytoplasm. The protein localises to the cytoskeleton. It localises to the myofibril. The protein resides in the sarcomere. Its subcellular location is the m line. It is found in the cytosol. The protein localises to the cell membrane. Functionally, fodrin, which seems to be involved in secretion, interacts with calmodulin in a calcium-dependent manner and is thus candidate for the calcium-dependent movement of the cytoskeleton at the membrane. Plays a critical role in central nervous system development and function. The chain is Spectrin beta chain, non-erythrocytic 1 (SPTBN1) from Homo sapiens (Human).